A 604-amino-acid polypeptide reads, in one-letter code: Elongation factor 4 (604 aa).

Residues 10–191 (KNIRNFSIIA…KIITTIPAPS (182 aa)) enclose the tr-type G domain. GTP contacts are provided by residues 22-27 (DHGKST) and 138-141 (NKID).

It belongs to the TRAFAC class translation factor GTPase superfamily. Classic translation factor GTPase family. LepA subfamily.

The protein resides in the cell inner membrane. It catalyses the reaction GTP + H2O = GDP + phosphate + H(+). Required for accurate and efficient protein synthesis under certain stress conditions. May act as a fidelity factor of the translation reaction, by catalyzing a one-codon backward translocation of tRNAs on improperly translocated ribosomes. Back-translocation proceeds from a post-translocation (POST) complex to a pre-translocation (PRE) complex, thus giving elongation factor G a second chance to translocate the tRNAs correctly. Binds to ribosomes in a GTP-dependent manner. The chain is Elongation factor 4 from Helicobacter pylori (strain J99 / ATCC 700824) (Campylobacter pylori J99).